The primary structure comprises 218 residues: Guanylate kinase (218 aa).

Residues Gly-17–His-196 form the Guanylate kinase-like domain. Ser-24–Thr-31 contributes to the ATP binding site.

It belongs to the guanylate kinase family.

It is found in the cytoplasm. The enzyme catalyses GMP + ATP = GDP + ADP. In terms of biological role, essential for recycling GMP and indirectly, cGMP. The polypeptide is Guanylate kinase (Maricaulis maris (strain MCS10) (Caulobacter maris)).